A 215-amino-acid chain; its full sequence is Oligoribonuclease (215 aa).

The region spanning 5 to 170 is the Exonuclease domain; sequence LVWIDCEMTG…ADIHESIREL (166 aa). Tyr-127 is an active-site residue. Positions 196-215 are disordered; that stretch reads LSDGAGAQEETDSAEAPQSG.

The protein belongs to the oligoribonuclease family.

The protein localises to the cytoplasm. Its function is as follows. 3'-to-5' exoribonuclease specific for small oligoribonucleotides. This is Oligoribonuclease from Mycobacterium bovis (strain BCG / Pasteur 1173P2).